A 271-amino-acid chain; its full sequence is Thiazole synthase (271 aa).

K95 (schiff-base intermediate with DXP) is an active-site residue. 1-deoxy-D-xylulose 5-phosphate contacts are provided by residues G156, A182 to G183, and N204 to T205.

Belongs to the ThiG family. Homotetramer. Forms heterodimers with either ThiH or ThiS.

The protein localises to the cytoplasm. It catalyses the reaction [ThiS sulfur-carrier protein]-C-terminal-Gly-aminoethanethioate + 2-iminoacetate + 1-deoxy-D-xylulose 5-phosphate = [ThiS sulfur-carrier protein]-C-terminal Gly-Gly + 2-[(2R,5Z)-2-carboxy-4-methylthiazol-5(2H)-ylidene]ethyl phosphate + 2 H2O + H(+). Its pathway is cofactor biosynthesis; thiamine diphosphate biosynthesis. Functionally, catalyzes the rearrangement of 1-deoxy-D-xylulose 5-phosphate (DXP) to produce the thiazole phosphate moiety of thiamine. Sulfur is provided by the thiocarboxylate moiety of the carrier protein ThiS. In vitro, sulfur can be provided by H(2)S. The sequence is that of Thiazole synthase from Shewanella amazonensis (strain ATCC BAA-1098 / SB2B).